The sequence spans 384 residues: S-adenosylmethionine synthase (384 aa).

H15 contacts ATP. D17 provides a ligand contact to Mg(2+). E43 is a binding site for K(+). L-methionine is bound by residues E56 and Q99. The segment at 99-109 (QSADINQGVDR) is flexible loop. Residues 164-166 (DAK), 230-231 (RF), D239, 245-246 (RK), A262, and K266 each bind ATP. Residue D239 coordinates L-methionine. Residue K270 coordinates L-methionine.

It belongs to the AdoMet synthase family. As to quaternary structure, homotetramer; dimer of dimers. It depends on Mg(2+) as a cofactor. The cofactor is K(+).

It localises to the cytoplasm. It catalyses the reaction L-methionine + ATP + H2O = S-adenosyl-L-methionine + phosphate + diphosphate. The protein operates within amino-acid biosynthesis; S-adenosyl-L-methionine biosynthesis; S-adenosyl-L-methionine from L-methionine: step 1/1. In terms of biological role, catalyzes the formation of S-adenosylmethionine (AdoMet) from methionine and ATP. The overall synthetic reaction is composed of two sequential steps, AdoMet formation and the subsequent tripolyphosphate hydrolysis which occurs prior to release of AdoMet from the enzyme. This Haemophilus influenzae (strain 86-028NP) protein is S-adenosylmethionine synthase.